Here is a 393-residue protein sequence, read N- to C-terminus: NAD(P)H-quinone oxidoreductase subunit H, chloroplastic (393 aa).

It belongs to the complex I 49 kDa subunit family. As to quaternary structure, NDH is composed of at least 16 different subunits, 5 of which are encoded in the nucleus.

The protein resides in the plastid. It is found in the chloroplast thylakoid membrane. It carries out the reaction a plastoquinone + NADH + (n+1) H(+)(in) = a plastoquinol + NAD(+) + n H(+)(out). The enzyme catalyses a plastoquinone + NADPH + (n+1) H(+)(in) = a plastoquinol + NADP(+) + n H(+)(out). NDH shuttles electrons from NAD(P)H:plastoquinone, via FMN and iron-sulfur (Fe-S) centers, to quinones in the photosynthetic chain and possibly in a chloroplast respiratory chain. The immediate electron acceptor for the enzyme in this species is believed to be plastoquinone. Couples the redox reaction to proton translocation, and thus conserves the redox energy in a proton gradient. The protein is NAD(P)H-quinone oxidoreductase subunit H, chloroplastic of Calycanthus floridus var. glaucus (Eastern sweetshrub).